A 254-amino-acid polypeptide reads, in one-letter code: Ribonuclease HII (254 aa).

Residues 46-234 enclose the RNase H type-2 domain; sequence KLIAGIDEVG…VWMASAPQEV (189 aa). Residues Asp52, Glu53, and Asp144 each contribute to the a divalent metal cation site.

Belongs to the RNase HII family. Mn(2+) is required as a cofactor. Requires Mg(2+) as cofactor.

The protein resides in the cytoplasm. The catalysed reaction is Endonucleolytic cleavage to 5'-phosphomonoester.. In terms of biological role, endonuclease that specifically degrades the RNA of RNA-DNA hybrids. In Koribacter versatilis (strain Ellin345), this protein is Ribonuclease HII.